The following is a 387-amino-acid chain: Protoheme IX farnesyltransferase, mitochondrial (387 aa).

Helical transmembrane passes span 95 to 115 (LTVL…YPGL), 117 to 137 (FNTL…ANAF), 183 to 203 (FLVN…YMGI), 212 to 232 (IVNT…GWAA), 242 to 262 (PGGL…FNAF), 284 to 306 (ALNA…AYIS), 311 to 330 (GPWY…ARAW), and 345 to 365 (FFAS…CHMI).

Belongs to the UbiA prenyltransferase family.

It localises to the mitochondrion membrane. The enzyme catalyses heme b + (2E,6E)-farnesyl diphosphate + H2O = Fe(II)-heme o + diphosphate. Converts protoheme IX and farnesyl diphosphate to heme O. In Schizosaccharomyces pombe (strain 972 / ATCC 24843) (Fission yeast), this protein is Protoheme IX farnesyltransferase, mitochondrial (cox10).